The chain runs to 739 residues: Transcription activator of gluconeogenesis MCYG_04674 (739 aa).

Positions 1 to 33 are enriched in polar residues; it reads MSPHQTTGQESDNMAVNGENAQASSQYIQLNSE. A disordered region spans residues 1-62; it reads MSPHQTTGQE…PSRPKRKKAK (62 aa). The span at 40 to 55 shows a compositional bias: basic and acidic residues; sequence AAEKKAAAAKAKDPSR. The zn(2)-C6 fungal-type DNA-binding region spans 65–93; that stretch reads CYACQRGHLTCGDERPCQRCIKRGFQDAC. Disordered stretches follow at residues 174–223, 264–308, 380–420, 537–574, and 639–668; these read GPEN…QFNS, DTPP…GDSG, SRQN…HKNA, NHNV…STTA, and AQNN…GQRR. 2 stretches are compositionally biased toward polar residues: residues 267 to 284 and 397 to 411; these read PSDN…SSGT and PVVS…NLNI. The segment covering 547–557 has biased composition (low complexity); it reads GLLTGSTSRGS. Residues 562 to 574 show a composition bias toward polar residues; that stretch reads PYSSDQFNSSTTA. Over residues 653-664 the composition is skewed to low complexity; the sequence is NSSSNGTTSTGR.

This sequence belongs to the ERT1/acuK family.

Its subcellular location is the nucleus. Functionally, transcription factor which regulates nonfermentable carbon utilization. Activator of gluconeogenetic genes. This is Transcription activator of gluconeogenesis MCYG_04674 from Arthroderma otae (strain ATCC MYA-4605 / CBS 113480) (Microsporum canis).